The primary structure comprises 548 residues: Folylpolyglutamate synthase (548 aa).

An ATP-binding site is contributed by 130–133 (GKGS). Mg(2+) is bound by residues S157, E234, and H262. Residues R382 and D396 each coordinate ATP.

Belongs to the folylpolyglutamate synthase family. Requires a monovalent cation as cofactor.

Its subcellular location is the mitochondrion inner membrane. The protein localises to the mitochondrion matrix. The protein resides in the cytoplasm. It catalyses the reaction (6S)-5,6,7,8-tetrahydrofolyl-(gamma-L-Glu)(n) + L-glutamate + ATP = (6S)-5,6,7,8-tetrahydrofolyl-(gamma-L-Glu)(n+1) + ADP + phosphate + H(+). It participates in cofactor biosynthesis; tetrahydrofolylpolyglutamate biosynthesis. Its function is as follows. Catalyzes conversion of folates to polyglutamate derivatives allowing concentration of folate compounds in the cell and the intracellular retention of these cofactors, which are important substrates for most of the folate-dependent enzymes that are involved in one-carbon transfer reactions involved in purine, pyrimidine and amino acid synthesis. Required for methionine synthesis and maintenance of intact mitochondrial DNA. Involved in telomere maintenance. The protein is Folylpolyglutamate synthase of Saccharomyces cerevisiae (strain AWRI1631) (Baker's yeast).